Here is a 56-residue protein sequence, read N- to C-terminus: Endoregulin (56 aa).

The chain crosses the membrane as a helical span at residues 25–45 (LTVIGLFTSTFLLFVLFAVVF).

Homooligomer. Can also form heterooligomers with other sarcoplasmic/endoplasmic reticulum calcium ATPase (SERCA) regulators ARLN, PLN, SLN and STRIT1/DWORF. Monomer. Interacts as a monomer with ATP2A2/SERCA2; the interaction results in inhibition of ATP2A2 Ca(2+) affinity. As to expression, largely expressed in non-muscle tissues with the exception of weak expression in body wall muscles at 14.5 dpc. Expressed in epithelial cells of the trachea, bronchus, lung, intestine, pancreas, and liver.

Its subcellular location is the endoplasmic reticulum membrane. Inhibits the activity of the calcium ATPases ATP2A2/SERCA2 and ATP2A3/SERCA3 by decreasing their apparent affinity for Ca(2+). This chain is Endoregulin (Erln), found in Mus musculus (Mouse).